The chain runs to 115 residues: U3-lycotoxin-Ls1g (115 aa).

Positions 1-20 are cleaved as a signal peptide; the sequence is MKFVLLFGVFLVTLFSYSSA. Positions 21-44 are excised as a propeptide; it reads EMLDDFDQADEDELLSLIEKEEAR. Disulfide bonds link C48/C63, C55/C72, C62/C87, and C74/C85.

The protein belongs to the neurotoxin 19 (CSTX) family. 01 subfamily. Expressed by the venom gland.

It is found in the secreted. The sequence is that of U3-lycotoxin-Ls1g from Lycosa singoriensis (Wolf spider).